The chain runs to 1281 residues: MSTSINLKNTQFYKEVRGVSMENQRNLRSMSNRMLSVNFPPSKCALWDPAPMGDPFGLHFSYYRNPRLLVSEKALRLSSRHAKTGRKPFSCFLLGTFSVDEDEEGVTLTVDRFDPGREKTGSGSSKVPTAQLPGDFIIPCTISIGKGSNNVIVHTPEDFTSSFMSLQSHLHGKEALDLAKLLAMRAHITYTENMDNLHFDLHWAAVTVANTFESTPIKPVPIIPTALARNLGSHNNIAHLQGTHKSGYLTMDQTRKLLLVLESDPKVYMLPLVGIWLSGITHIHSPQVWAACLRYIFSSSIHERVLSESGSFLIILYSLTHKEPEFYECSPCVKHDPLGFQLLTCQDTLHLFKNAEVSKNPLLRFELSSECQELEADLFNETCKNKSTTVFKQSPLPNKLSTSDHDSGVEEEDFSPRPSPRPHPSVQQVSRIHPSVPELSLVFSSFFDPKSASHNPENRTRNNSPFSSTPQNVNNMFAGAPKPNKEPQPCDNQASGLLPRPAPSLNTNSTAMKPSKVKSSPADYQPPHLQSSNQIRRNSTSTSSAFSTPRSGCSPDSTVHQVKGSCEQEQNINGSAQPQGTTPLMRSGSYSRQVSSNFPNHNVTFPLHSRHVAEVAKPSPNLAPFHQTNVCTSCHSLVSCHSKNCWPAMGHLTYHTMENPPETCESVMPAYQNVVCPSVCCPQTAGKTEFCSPVDLVLLSPGRRDSLPLNPCSPHTCRHTPPPVIPTATGMLGLSTEAYRLFAEQDKQLKLLQAQIQRLLEAQAAESEPSKTTIPNNSKQKQVESVSTEQEIKTSVSIAVSTGASLFWNPPCPEKEESMDKQDDSAFCNEFSVNVNTEDTSHATITSSIRAVDIHSFSESTQLTDRGNCTASLHVSHERDDASYPLPDVQQDINNSKSLSNQTDHTESPNTAEIDSGVSAVPPEKFYQDLLAQVNNLLKTSSTEDEMTSTKIDSGHIIEKTESLPCNPTENNDKNVLKATLKQLKSLGVNIDMNTSELQATKADTADSASILACINPEAVIPRLNYMSFSNIGLSGFVPNGVDLSMEANAIALKYLNESQLNQLSLSHANKNKQSDSISYNSLLPGTTEKSMVGLSLISPSNMSFATKKYMKRYGLIESSDSSMEEPDLANASSFALTPMSSDSTSENRLFFNDSCKDGNFVTCEEQKRKNADVDSAIGWAHHPETNKLRNITNEISGKLINVAPLQEDRPLHFLKDLKARTKLSAGKAQFTQHPEKENTGDVQFFHEKHDGFSGKKSLGGPSTVGDILDVNRLRQLPKLF.

Composition is skewed to polar residues over residues 390 to 401, 461 to 475, 528 to 560, 567 to 592, 770 to 790, and 891 to 913; these read VFKQSPLPNKLS, RNNS…NVNN, HLQS…STVH, EQEQ…SYSR, SKTT…STEQ, and QDIN…NTAE. Disordered regions lie at residues 390–431, 450–592, 765–790, and 879–915; these read VFKQ…QVSR, KSAS…SYSR, AESE…STEQ, and RDDA…AEID.

The protein resides in the cytoplasm. The protein localises to the cytosol. Its subcellular location is the cytoskeleton. It is found in the microtubule organizing center. It localises to the centrosome. The protein resides in the centriole. Functionally, plays an essential role in early embryonic development. Plays an important role in the regulation of centriole duplication. The polypeptide is SCL-interrupting locus protein homolog (stil) (Xenopus laevis (African clawed frog)).